Consider the following 164-residue polypeptide: CASP-like protein 1C2 (164 aa).

The Cytoplasmic portion of the chain corresponds to 1–8 (MAVELKKV). The chain crosses the membrane as a helical span at residues 9–29 (FSTILRFLALAATVVAVIVMI). Topologically, residues 30–53 (RSHDSAIVLNLTFSAKYNNTPAFK) are extracellular. N-linked (GlcNAc...) asparagine glycosylation occurs at N39. The helical transmembrane segment at 54–74 (YFVIAEGIASVYTIIVIFLWS) threads the bilayer. At 75–80 (KGLLGR) the chain is on the cytoplasmic side. Residues 81 to 101 (LIVILDMVTTVLLTSSISAAL) traverse the membrane as a helical segment. Residues 102-129 (AIAQVGKKGNSHAGWLPVCGQVPKFCDQ) are Extracellular-facing. The helical transmembrane segment at 130 to 150 (AIIALVAGFVAAIVYFMLLLC) threads the bilayer. Residues 151-164 (SLHAVLTPIFAVKP) lie on the Cytoplasmic side of the membrane.

It belongs to the Casparian strip membrane proteins (CASP) family. Homodimer and heterodimers.

It is found in the cell membrane. The chain is CASP-like protein 1C2 from Ricinus communis (Castor bean).